The primary structure comprises 1065 residues: Outer capsid protein VP3 (1065 aa).

Its subcellular location is the virion. It carries out the reaction a 5'-end diphospho-ribonucleoside in mRNA + GTP + H(+) = a 5'-end (5'-triphosphoguanosine)-ribonucleoside in mRNA + diphosphate. It catalyses the reaction a 5'-end (5'-triphosphoguanosine)-ribonucleoside in mRNA + S-adenosyl-L-methionine = a 5'-end (N(7)-methyl 5'-triphosphoguanosine)-ribonucleoside in mRNA + S-adenosyl-L-homocysteine. In terms of biological role, outer capsid protein involved in mRNA capping. Catalyzes the last 3 enzymatic activities for formation of the 5' cap structure on the viral plus-strand transcripts, namely the RNA guanylyltransferase, RNA-7N- and RNA-2'O-methyltransferase activities. The polypeptide is Outer capsid protein VP3 (S3) (Cryphonectria parasitica mycoreovirus 1 (strain 9B21) (CpMYRV-1)).